The following is a 143-amino-acid chain: Large ribosomal subunit protein uL15 (143 aa).

The interval 1 to 47 is disordered; the sequence is MKLHELTPSEGSRFSRRRIGRGDSSGQGKTSGRGQKGQKARGKVRVG. A compositionally biased stretch (gly residues) spans 23-35; the sequence is DSSGQGKTSGRGQ.

This sequence belongs to the universal ribosomal protein uL15 family. Part of the 50S ribosomal subunit.

Its function is as follows. Binds to the 23S rRNA. The chain is Large ribosomal subunit protein uL15 from Lactiplantibacillus plantarum (strain ATCC BAA-793 / NCIMB 8826 / WCFS1) (Lactobacillus plantarum).